A 475-amino-acid chain; its full sequence is Bifunctional protein HldE (475 aa).

The ribokinase stretch occupies residues 1–320 (MNSSYLNFKD…AIMFQRSHNT (320 aa)). An ATP-binding site is contributed by 196–199 (NLLE). Residue Asp265 is part of the active site. A cytidylyltransferase region spans residues 346–475 (FTNGCFDILH…TTSIIEKANL (130 aa)).

This sequence in the N-terminal section; belongs to the carbohydrate kinase PfkB family. In the C-terminal section; belongs to the cytidylyltransferase family. Homodimer.

The enzyme catalyses D-glycero-beta-D-manno-heptose 7-phosphate + ATP = D-glycero-beta-D-manno-heptose 1,7-bisphosphate + ADP + H(+). It catalyses the reaction D-glycero-beta-D-manno-heptose 1-phosphate + ATP + H(+) = ADP-D-glycero-beta-D-manno-heptose + diphosphate. Its pathway is nucleotide-sugar biosynthesis; ADP-L-glycero-beta-D-manno-heptose biosynthesis; ADP-L-glycero-beta-D-manno-heptose from D-glycero-beta-D-manno-heptose 7-phosphate: step 1/4. It participates in nucleotide-sugar biosynthesis; ADP-L-glycero-beta-D-manno-heptose biosynthesis; ADP-L-glycero-beta-D-manno-heptose from D-glycero-beta-D-manno-heptose 7-phosphate: step 3/4. Its function is as follows. Catalyzes the phosphorylation of D-glycero-D-manno-heptose 7-phosphate at the C-1 position to selectively form D-glycero-beta-D-manno-heptose-1,7-bisphosphate. In terms of biological role, catalyzes the ADP transfer from ATP to D-glycero-beta-D-manno-heptose 1-phosphate, yielding ADP-D-glycero-beta-D-manno-heptose. This is Bifunctional protein HldE from Marinomonas sp. (strain MWYL1).